Consider the following 396-residue polypeptide: S-adenosylmethionine synthase (396 aa).

H16 serves as a coordination point for ATP. D18 contributes to the Mg(2+) binding site. Residue E44 participates in K(+) binding. L-methionine contacts are provided by E57 and Q100. A flexible loop region spans residues 100 to 110 (QSPDIAQGVDD). Residues 174-176 (DAK), 241-242 (RF), D250, 256-257 (RK), A273, and K277 each bind ATP. D250 is a binding site for L-methionine. K281 provides a ligand contact to L-methionine.

The protein belongs to the AdoMet synthase family. In terms of assembly, homotetramer; dimer of dimers. Requires Mg(2+) as cofactor. K(+) is required as a cofactor.

Its subcellular location is the cytoplasm. The catalysed reaction is L-methionine + ATP + H2O = S-adenosyl-L-methionine + phosphate + diphosphate. It participates in amino-acid biosynthesis; S-adenosyl-L-methionine biosynthesis; S-adenosyl-L-methionine from L-methionine: step 1/1. Functionally, catalyzes the formation of S-adenosylmethionine (AdoMet) from methionine and ATP. The overall synthetic reaction is composed of two sequential steps, AdoMet formation and the subsequent tripolyphosphate hydrolysis which occurs prior to release of AdoMet from the enzyme. This chain is S-adenosylmethionine synthase, found in Pediococcus pentosaceus (strain ATCC 25745 / CCUG 21536 / LMG 10740 / 183-1w).